We begin with the raw amino-acid sequence, 852 residues long: Disease resistance RPP13-like protein 4 (852 aa).

Positions 17–68 form a coiled coil; that stretch reads LEEKGRTVSDYRKQLEDLQSELKYMQSFLKDAERQKRTNETLRTLVADLREL. Residues arginine 149, valine 161, 189–196, arginine 297, and lysine 363 contribute to the ADP site; that span reads GMGGLGKT. The 247-residue stretch at 164 to 410 folds into the NB-ARC domain; sequence EGDKRKIKEW…MSSLQLSYDE (247 aa). 6 LRR repeats span residues 558 to 581, 585 to 609, 633 to 657, 683 to 706, 763 to 786, and 798 to 824; these read CKYLRVLDISKSIFDAPLSEILDE, LQHLACLSLSNTHPLIQFPRSMEDL, FKKLLVLDMTNCGSLECFPKGIGSL, LTNLRKLGLSLTRGDQIEEEELDS, LPMLRYMSICSGNLVKMQEPFWGN, and LSSLSDLDMDWEVLQQSMPYLRTVTAN.

It belongs to the disease resistance NB-LRR family. RPP13 subfamily. Interacts with ZED1/ZRK5. Component of a stable high-order oligomeric complex made of RKS1 and RPP13L4/ZAR1 which recruits ZED1-related kinases (e.g. uridylylated PBL2 and acetylated ZED1/ZRK5) in the presence of ATP and pathogenic bacteria type III secreted effector (T3SE) proteins (e.g. Pseudomonas syringae HopZ1a and HopF2a and Xanthomonas campestris pv. campestris (Xcc) XopAC/AvrAC) to form a wheel-like pentameric resistosome; this complex triggers immunity toward pathogenic bacteria (e.g. X.campestris and P.syringae), especially in vascular tissues. Interacts with RKS1, ZED1/ZRK5, ZRK3, ZRK6 and ZRK15.

The protein localises to the cell membrane. Its subcellular location is the nucleus. Exhibits autoinhibition activity. In terms of biological role, CC-NB-LRR receptor-like protein required for recognition of pathogenic bacteria type III effectors (T3E) such as Pseudomonas syringae HopZ1a and HopF2a and Xanthomonas campestris pv. campestris (Xcc) XopAC/AvrAC; this recognition requires ZED1-related kinases (e.g. PBL2, ZRK3 and ZED1/ZRK5). Confers allele-specific recognition and virulence attenuation of HopZ1a. Immunity mediated by RPP13L4/ZAR1 is independent of several genes required by other resistance protein signaling pathways such as NDR1 and RAR1. Together with ZED1/ZRK5, involved in the regulation of the ambient temperature-sensitive intersection of growth and immune response in the absence of pathogens. This is Disease resistance RPP13-like protein 4 (RPP13L4) from Arabidopsis thaliana (Mouse-ear cress).